The sequence spans 142 residues: Small ribosomal subunit protein uS12 (142 aa).

Belongs to the universal ribosomal protein uS12 family.

In Tetrahymena thermophila, this protein is Small ribosomal subunit protein uS12.